Here is a 379-residue protein sequence, read N- to C-terminus: Succinyl-diaminopimelate desuccinylase (379 aa).

His70 is a Zn(2+) binding site. Asp72 is an active-site residue. Asp103 provides a ligand contact to Zn(2+). The active-site Proton acceptor is the Glu137. Glu138, Glu166, and His352 together coordinate Zn(2+).

Belongs to the peptidase M20A family. DapE subfamily. Homodimer. Zn(2+) is required as a cofactor. It depends on Co(2+) as a cofactor.

The enzyme catalyses N-succinyl-(2S,6S)-2,6-diaminopimelate + H2O = (2S,6S)-2,6-diaminopimelate + succinate. It functions in the pathway amino-acid biosynthesis; L-lysine biosynthesis via DAP pathway; LL-2,6-diaminopimelate from (S)-tetrahydrodipicolinate (succinylase route): step 3/3. Its function is as follows. Catalyzes the hydrolysis of N-succinyl-L,L-diaminopimelic acid (SDAP), forming succinate and LL-2,6-diaminopimelate (DAP), an intermediate involved in the bacterial biosynthesis of lysine and meso-diaminopimelic acid, an essential component of bacterial cell walls. This is Succinyl-diaminopimelate desuccinylase from Burkholderia cenocepacia (strain ATCC BAA-245 / DSM 16553 / LMG 16656 / NCTC 13227 / J2315 / CF5610) (Burkholderia cepacia (strain J2315)).